Here is a 344-residue protein sequence, read N- to C-terminus: Oxygen sensor histidine kinase NreB (344 aa).

[4Fe-4S] cluster contacts are provided by cysteine 58, cysteine 61, cysteine 73, and cysteine 76. The Histidine kinase domain maps to 152-344 (RISRELHDSV…GTNVTLNIPI (193 aa)). Histidine 158 is modified (phosphohistidine; by autocatalysis).

It depends on [4Fe-4S] cluster as a cofactor. In terms of processing, autophosphorylated.

Its subcellular location is the cytoplasm. It catalyses the reaction ATP + protein L-histidine = ADP + protein N-phospho-L-histidine.. Member of the two-component regulatory system NreB/NreC involved in the control of dissimilatory nitrate/nitrite reduction in response to oxygen. NreB functions as a direct oxygen sensor histidine kinase which is autophosphorylated, in the absence of oxygen, probably at the conserved histidine residue, and transfers its phosphate group probably to a conserved aspartate residue of NreC. NreB/NreC activates the expression of the nitrate (narGHJI) and nitrite (nir) reductase operons, as well as the putative nitrate transporter gene narT. In Staphylococcus aureus (strain Mu3 / ATCC 700698), this protein is Oxygen sensor histidine kinase NreB (nreB).